The following is a 780-amino-acid chain: Protein SEY1 (780 aa).

Residues 1 to 680 lie on the Cytoplasmic side of the membrane; that stretch reads MDSKEEAIQL…KRSMIKTTTH (680 aa). Positions 35 to 265 constitute a GB1/RHD3-type G domain; it reads GVNYHVISVF…NEDYYFKPEY (231 aa). 45 to 52 contributes to the GTP binding site; that stretch reads GSQSSGKS. A coiled-coil region spans residues 440–463; sequence EVKEEVVKRFENDLKETSDKLRVT. A helical membrane pass occupies residues 681–701; the sequence is IPLWIYAIIVVLGWNEFMMVI. Residues 702–704 lie on the Lumenal side of the membrane; it reads RNP. A helical membrane pass occupies residues 705–725; sequence LFVTLTILILVSFYFINKFDL. At 726-780 the chain is on the cytoplasmic side; sequence WGPVKSVAQTAAGETIGTIKTKLRDFVLEEHEKTPKIQSEKSNSDSEKVVENEKS. The segment at 756-780 is disordered; the sequence is HEKTPKIQSEKSNSDSEKVVENEKS.

It belongs to the TRAFAC class dynamin-like GTPase superfamily. GB1/RHD3 GTPase family. RHD3 subfamily.

The protein resides in the endoplasmic reticulum membrane. Cooperates with the reticulon proteins and tubule-shaping DP1 family proteins to generate and maintain the structure of the tubular endoplasmic reticulum network. Has GTPase activity, which is required for its function in ER organization. The polypeptide is Protein SEY1 (Vanderwaltozyma polyspora (strain ATCC 22028 / DSM 70294 / BCRC 21397 / CBS 2163 / NBRC 10782 / NRRL Y-8283 / UCD 57-17) (Kluyveromyces polysporus)).